Consider the following 211-residue polypeptide: MFKRLMMVALLVIAPLSAATAADQTNPYKLMDEAAQKTFDRLKNEQPQIRANPDYLRTIVDQELLPYVQVKYAGALVLGQYYKSATPAQREAYFAAFREYLKQAYGQALAMYHGQTYQIAPEQPLGDKTIVPIRVTIIDPNGRPPVRLDFQWRKNSQTGNWQAYDMIAEGVSMITTKQNEWGTLLRTKGIDGLTAQLKSISQQKITLEEKK.

The signal sequence occupies residues 1–21 (MFKRLMMVALLVIAPLSAATA).

Belongs to the MlaC/ttg2D family. As to quaternary structure, interacts with the MlaA-OmpF outer membrane complex and with the inner membrane ABC transporter complex MlaFEDB, via direct interaction with MlaD.

Its subcellular location is the periplasm. Involved in a phospholipid transport pathway that maintains lipid asymmetry in the outer membrane by retrograde trafficking of phospholipids from the outer membrane to the inner membrane. May transfer phospholipid across the periplasmic space and deliver it to the MlaFEDB complex at the inner membrane. The polypeptide is Intermembrane phospholipid transport system binding protein MlaC (Escherichia coli (strain K12)).